The sequence spans 109 residues: uncharacterized protein (109 aa).

This is an uncharacterized protein from Saccharomyces cerevisiae (strain ATCC 204508 / S288c) (Baker's yeast).